Here is a 125-residue protein sequence, read N- to C-terminus: Large ribosomal subunit protein bL12 (125 aa).

Belongs to the bacterial ribosomal protein bL12 family. Homodimer. Part of the ribosomal stalk of the 50S ribosomal subunit. Forms a multimeric L10(L12)X complex, where L10 forms an elongated spine to which 2 to 4 L12 dimers bind in a sequential fashion. Binds GTP-bound translation factors.

Functionally, forms part of the ribosomal stalk which helps the ribosome interact with GTP-bound translation factors. Is thus essential for accurate translation. This chain is Large ribosomal subunit protein bL12, found in Sphingopyxis alaskensis (strain DSM 13593 / LMG 18877 / RB2256) (Sphingomonas alaskensis).